A 141-amino-acid chain; its full sequence is VLSPADKTNVKTAWNAVGGQAGEHGAEALERMFLSFPTTKTYFPHFDLSHGSGQVKAHGKKVADALTNAVSHLDDMPGALSALSDLHAHKLRVDPVNFKLLSHCLLVTLASHHPAEFTPAVHASLDKFFAAVSTVLTSKYR.

Positions 1 to 141 (VLSPADKTNV…VSTVLTSKYR (141 aa)) constitute a Globin domain. A Phosphoserine modification is found at Ser-3. Residue Lys-7 is modified to N6-succinyllysine. The residue at position 8 (Thr-8) is a Phosphothreonine. Lys-11 is modified (N6-succinyllysine). Position 35 is a phosphoserine (Ser-35). Lys-40 bears the N6-succinyllysine mark. A Phosphoserine modification is found at Ser-49. Position 58 (His-58) interacts with O2. A heme b-binding site is contributed by His-87. Ser-102 is modified (phosphoserine). Phosphothreonine is present on Thr-108. Ser-124 carries the post-translational modification Phosphoserine. Phosphothreonine is present on residues Thr-134 and Thr-137. Ser-138 is modified (phosphoserine).

The protein belongs to the globin family. As to quaternary structure, heterotetramer of two alpha chains and two beta chains. Red blood cells.

Its function is as follows. Involved in oxygen transport from the lung to the various peripheral tissues. Functionally, hemopressin acts as an antagonist peptide of the cannabinoid receptor CNR1. Hemopressin-binding efficiently blocks cannabinoid receptor CNR1 and subsequent signaling. This is Hemoglobin subunit alpha (HBA) from Eulemur fulvus fulvus (Brown lemur).